Consider the following 248-residue polypeptide: 3-deoxy-manno-octulosonate cytidylyltransferase (248 aa).

This sequence belongs to the KdsB family.

It is found in the cytoplasm. It carries out the reaction 3-deoxy-alpha-D-manno-oct-2-ulosonate + CTP = CMP-3-deoxy-beta-D-manno-octulosonate + diphosphate. The protein operates within nucleotide-sugar biosynthesis; CMP-3-deoxy-D-manno-octulosonate biosynthesis; CMP-3-deoxy-D-manno-octulosonate from 3-deoxy-D-manno-octulosonate and CTP: step 1/1. It functions in the pathway bacterial outer membrane biogenesis; lipopolysaccharide biosynthesis. Functionally, activates KDO (a required 8-carbon sugar) for incorporation into bacterial lipopolysaccharide in Gram-negative bacteria. The protein is 3-deoxy-manno-octulosonate cytidylyltransferase of Citrobacter koseri (strain ATCC BAA-895 / CDC 4225-83 / SGSC4696).